Reading from the N-terminus, the 39-residue chain is Photosystem II reaction center protein Y (39 aa).

Residues 5–23 traverse the membrane as a helical segment; that stretch reads VLVVVGPLLIAASWAVFNI.

This sequence belongs to the PsbY family. In terms of assembly, PSII is composed of 1 copy each of membrane proteins PsbA, PsbB, PsbC, PsbD, PsbE, PsbF, PsbH, PsbI, PsbJ, PsbK, PsbL, PsbM, PsbT, PsbX, PsbY, PsbZ, Psb30/Ycf12, peripheral proteins PsbO, CyanoQ (PsbQ), PsbU, PsbV and a large number of cofactors. It forms dimeric complexes.

It localises to the cellular thylakoid membrane. Its function is as follows. Loosely associated component of the core of photosystem II (PSII), it is not always seen in crystals. PSII is a light-driven water plastoquinone oxidoreductase, using light energy to abstract electrons from H(2)O, generating a proton gradient subsequently used for ATP formation. The polypeptide is Photosystem II reaction center protein Y (Rippkaea orientalis (strain PCC 8801 / RF-1) (Cyanothece sp. (strain PCC 8801))).